A 474-amino-acid polypeptide reads, in one-letter code: tRNA-2-methylthio-N(6)-dimethylallyladenosine synthase (474 aa).

The 118-residue stretch at 3 to 120 (KKLHIKTWGC…LPEMINHVQG (118 aa)) folds into the MTTase N-terminal domain. [4Fe-4S] cluster contacts are provided by Cys12, Cys49, Cys83, Cys157, Cys161, and Cys164. A Radical SAM core domain is found at 143 to 375 (RAEGPTAFVS…QQRISQQAME (233 aa)). In terms of domain architecture, TRAM spans 378-441 (RKMVGTVQRV…ASSLRGILLR (64 aa)).

This sequence belongs to the methylthiotransferase family. MiaB subfamily. Monomer. Requires [4Fe-4S] cluster as cofactor.

The protein resides in the cytoplasm. The catalysed reaction is N(6)-dimethylallyladenosine(37) in tRNA + (sulfur carrier)-SH + AH2 + 2 S-adenosyl-L-methionine = 2-methylsulfanyl-N(6)-dimethylallyladenosine(37) in tRNA + (sulfur carrier)-H + 5'-deoxyadenosine + L-methionine + A + S-adenosyl-L-homocysteine + 2 H(+). Catalyzes the methylthiolation of N6-(dimethylallyl)adenosine (i(6)A), leading to the formation of 2-methylthio-N6-(dimethylallyl)adenosine (ms(2)i(6)A) at position 37 in tRNAs that read codons beginning with uridine. The sequence is that of tRNA-2-methylthio-N(6)-dimethylallyladenosine synthase from Yersinia pseudotuberculosis serotype O:1b (strain IP 31758).